Here is a 246-residue protein sequence, read N- to C-terminus: tRNA pseudouridine synthase A (246 aa).

Aspartate 52 (nucleophile) is an active-site residue. Residue tyrosine 112 participates in substrate binding.

Belongs to the tRNA pseudouridine synthase TruA family. In terms of assembly, homodimer.

The catalysed reaction is uridine(38/39/40) in tRNA = pseudouridine(38/39/40) in tRNA. Its function is as follows. Formation of pseudouridine at positions 38, 39 and 40 in the anticodon stem and loop of transfer RNAs. This Pelagibacter ubique (strain HTCC1062) protein is tRNA pseudouridine synthase A.